Reading from the N-terminus, the 390-residue chain is 3,5-dihydroxybiphenyl synthase (390 aa).

Residue Cys161 is part of the active site.

The protein belongs to the thiolase-like superfamily. Chalcone/stilbene synthases family. In terms of assembly, homodimer.

It carries out the reaction benzoyl-CoA + 3 malonyl-CoA + 3 H(+) = biphenyl-3,5-diol + 4 CO2 + 4 CoA. In terms of biological role, type III polyketide synthase involved in the biosynthesis of the phytoalexins bisphenyls and dibenzofurans. Can also use salicoyl-CoA and malonyl-CoA to produce a diketide intermediate yielding 4-hydroxycoumarin after cyclization and enolization. Can also use m-hydroxybenzoyl-CoA as substrate, producing m-hydroxybenzoyl diacetic acid lactone as a derailment product. No activity with p-hydroxybenzoyl-CoA, CoA-linked cinnamic acids or acetyl-CoA. The protein is 3,5-dihydroxybiphenyl synthase (BIS1) of Sorbus aucuparia (European mountain ash).